Consider the following 374-residue polypeptide: UPF0754 membrane protein SAB1779c (374 aa).

Helical transmembrane passes span Leu-4–Ile-24 and Ser-354–Val-374.

It belongs to the UPF0754 family.

The protein resides in the cell membrane. This chain is UPF0754 membrane protein SAB1779c, found in Staphylococcus aureus (strain bovine RF122 / ET3-1).